The sequence spans 260 residues: Thiamine thiazole synthase (260 aa).

Residues S41, 60–61 (ER), G68, V131, and 159–161 (HVD) contribute to the NAD(+) site. Fe cation contacts are provided by D161 and H176. Residue M225 participates in NAD(+) binding. R235 is a glycine binding site.

The protein belongs to the THI4 family. Homooctamer; tetramer of dimers. Requires Fe(2+) as cofactor.

It carries out the reaction hydrogen sulfide + glycine + NAD(+) = ADP-5-ethyl-4-methylthiazole-2-carboxylate + nicotinamide + 3 H2O + H(+). It functions in the pathway cofactor biosynthesis; thiamine diphosphate biosynthesis. Involved in the biosynthesis of the thiazole moiety of thiamine. Catalyzes the conversion of NAD and glycine to adenosine diphosphate 5-(2-hydroxyethyl)-4-methylthiazole-2-carboxylate (ADT), an adenylated thiazole intermediate, using free sulfide as a source of sulfur. This Archaeoglobus fulgidus (strain ATCC 49558 / DSM 4304 / JCM 9628 / NBRC 100126 / VC-16) protein is Thiamine thiazole synthase.